We begin with the raw amino-acid sequence, 234 residues long: MIDQGRKSLEERVGHQFKNPALLERALTHKSFANELRNTVEHNEKLEFLGDAVLDLVVGEFLYEKFPTDTEGGLSKKRASIVNEEVLSELALEMGLNKLMQLGKGEALTGGAQKPRLIASSFEAIVGALYLDGGFEVARSFIRQEFVPLADRVCGHEDFERDYKTRLQELVQKSSKETPRYEVLAEEGPPHDREFLVCVKVKEDVWAQGRGRSKKNAEQMAAKNALEMKYKETN.

In terms of domain architecture, RNase III spans 6–134 (RKSLEERVGH…IVGALYLDGG (129 aa)). Mg(2+) is bound at residue Glu47. Asp51 is a catalytic residue. 2 residues coordinate Mg(2+): Ser120 and Glu123. Glu123 is a catalytic residue. The 70-residue stretch at 162–231 (DYKTRLQELV…AKNALEMKYK (70 aa)) folds into the DRBM domain.

Belongs to the ribonuclease III family. As to quaternary structure, homodimer. It depends on Mg(2+) as a cofactor.

It is found in the cytoplasm. The catalysed reaction is Endonucleolytic cleavage to 5'-phosphomonoester.. In terms of biological role, digests double-stranded RNA. Involved in the processing of primary rRNA transcript to yield the immediate precursors to the large and small rRNAs (23S and 16S). Processes some mRNAs, and tRNAs when they are encoded in the rRNA operon. Processes pre-crRNA and tracrRNA of type II CRISPR loci if present in the organism. This Bdellovibrio bacteriovorus (strain ATCC 15356 / DSM 50701 / NCIMB 9529 / HD100) protein is Ribonuclease 3.